A 216-amino-acid chain; its full sequence is DNA replication complex GINS protein psf1 (216 aa).

The interval 110–133 (QTTGGPKGVTEGNEGGGTTSSLSP) is disordered. A compositionally biased stretch (gly residues) spans 111 to 127 (TTGGPKGVTEGNEGGGT).

It belongs to the GINS1/PSF1 family. Component of the GINS complex which is a heterotetramer of div-26/sld5, drc-1/psf1, drc-2/psf2 and drc-3/psf3.

Its subcellular location is the nucleus. The GINS complex plays an essential role in the initiation of DNA replication. In Neurospora crassa (strain ATCC 24698 / 74-OR23-1A / CBS 708.71 / DSM 1257 / FGSC 987), this protein is DNA replication complex GINS protein psf1 (drc-1).